A 504-amino-acid polypeptide reads, in one-letter code: D-alanine--D-alanyl carrier protein ligase (504 aa).

152-153 (TS) is an ATP binding site. Asp-197 is a D-alanine binding site. 292 to 297 (NTYGPT) contributes to the ATP binding site. Val-301 is a binding site for D-alanine. ATP contacts are provided by residues Asp-383, 394–397 (YNGR), and Lys-492. A D-alanine-binding site is contributed by Lys-492.

This sequence belongs to the ATP-dependent AMP-binding enzyme family. DltA subfamily.

It is found in the cytoplasm. The catalysed reaction is holo-[D-alanyl-carrier protein] + D-alanine + ATP = D-alanyl-[D-alanyl-carrier protein] + AMP + diphosphate. Its pathway is cell wall biogenesis; lipoteichoic acid biosynthesis. Catalyzes the first step in the D-alanylation of lipoteichoic acid (LTA), the activation of D-alanine and its transfer onto the D-alanyl carrier protein (Dcp) DltC. In an ATP-dependent two-step reaction, forms a high energy D-alanyl-AMP intermediate, followed by transfer of the D-alanyl residue as a thiol ester to the phosphopantheinyl prosthetic group of the Dcp. D-alanylation of LTA plays an important role in modulating the properties of the cell wall in Gram-positive bacteria, influencing the net charge of the cell wall. The polypeptide is D-alanine--D-alanyl carrier protein ligase (Bacillus cereus (strain Q1)).